We begin with the raw amino-acid sequence, 364 residues long: Spermidine/putrescine import ATP-binding protein PotA (364 aa).

In terms of domain architecture, ABC transporter spans 5–235 (LSFKDVSKGF…PVNRFVADFI (231 aa)). 37–44 (GPSGCGKT) contacts ATP.

The protein belongs to the ABC transporter superfamily. Spermidine/putrescine importer (TC 3.A.1.11.1) family. In terms of assembly, the complex is composed of two ATP-binding proteins (PotA), two transmembrane proteins (PotB and PotC) and a solute-binding protein (PotD).

Its subcellular location is the cell membrane. It carries out the reaction ATP + H2O + polyamine-[polyamine-binding protein]Side 1 = ADP + phosphate + polyamineSide 2 + [polyamine-binding protein]Side 1.. Part of the ABC transporter complex PotABCD involved in spermidine/putrescine import. Responsible for energy coupling to the transport system. This is Spermidine/putrescine import ATP-binding protein PotA from Staphylococcus epidermidis (strain ATCC 35984 / DSM 28319 / BCRC 17069 / CCUG 31568 / BM 3577 / RP62A).